The following is a 301-amino-acid chain: tRNA dimethylallyltransferase (301 aa).

9–16 serves as a coordination point for ATP; the sequence is GPTASGKS. Residue 11–16 participates in substrate binding; the sequence is TASGKS. Positions 34–37 are interaction with substrate tRNA; the sequence is DSMQ.

Belongs to the IPP transferase family. Monomer. It depends on Mg(2+) as a cofactor.

The enzyme catalyses adenosine(37) in tRNA + dimethylallyl diphosphate = N(6)-dimethylallyladenosine(37) in tRNA + diphosphate. Catalyzes the transfer of a dimethylallyl group onto the adenine at position 37 in tRNAs that read codons beginning with uridine, leading to the formation of N6-(dimethylallyl)adenosine (i(6)A). This chain is tRNA dimethylallyltransferase, found in Corynebacterium efficiens (strain DSM 44549 / YS-314 / AJ 12310 / JCM 11189 / NBRC 100395).